The primary structure comprises 319 residues: Structure-specific endonuclease subunit SLX1 (319 aa).

One can recognise a GIY-YIG domain in the interval 20–103; it reads TFYCCYLLQS…QHGYKTHYIP (84 aa). The SLX1-type zinc-finger motif lies at 233–297; that stretch reads CNLCGQCYDY…LPNFCMCPGC (65 aa).

The protein belongs to the SLX1 family. As to quaternary structure, forms a heterodimer with SLX4. A divalent metal cation is required as a cofactor.

Its subcellular location is the nucleus. Functionally, catalytic subunit of the SLX1-SLX4 structure-specific endonuclease that resolves DNA secondary structures generated during DNA repair and recombination. Has endonuclease activity towards branched DNA substrates, introducing single-strand cuts in duplex DNA close to junctions with ss-DNA. The polypeptide is Structure-specific endonuclease subunit SLX1 (Vanderwaltozyma polyspora (strain ATCC 22028 / DSM 70294 / BCRC 21397 / CBS 2163 / NBRC 10782 / NRRL Y-8283 / UCD 57-17) (Kluyveromyces polysporus)).